A 492-amino-acid chain; its full sequence is Virion host shutoff protein (492 aa).

Disordered regions lie at residues 110–130 (EEASDVDASPPPSPITDSRPS), 288–307 (SQARRAARRERANSRSLESM), and 334–371 (EDDYEEDPPLQPPDVAGGPRDGARSSSSEILTPPELVQ).

Belongs to the herpesviridae VHS protein family. As to quaternary structure, interacts with human EIF4H, EIF4A1 and EIF4A2; interaction with eIF4AI and EIF4A2 presumably allows Vhs protein to associate with the eIF4F cap-binding complex.

It is found in the virion. Its function is as follows. Minor structural protein that acts as an endoribonuclease during lytic infection. Degrades host mRNAs in the cytoplasm by cutting them at preferred sites, including some in regions of translation initiation. Together with inhibition of host splicing by ICP27, contributes to an overall decrease in host protein synthesis. Also, after the onset of viral transcription, accelerates the turnover of viral mRNA, thereby facilitating the sequential expression of different classes of viral genes. Binds translation initiation factors eIF4H, eIF4AI, and eIF4AII, thereby may interact directly with the translation initiation complex and thus digest specifically mRNAs. Also impedes antigen presentation by major histocompatibility complex class I and class II molecules, inhibits secretion of cytokines that would otherwise recruit lymphocytes and neutrophils cells to the site of infection and blocks the activation of dendritic cells. Impedes the alpha/beta interferon-mediated response to infection. Inhibits the integrated stress response (ISR) in the infected cell, this function requires the endonuclease activity. Stress granule formation is thus inhibited, which allows protein synthesis and viral replication. This chain is Virion host shutoff protein (UL41), found in Homo sapiens (Human).